The chain runs to 109 residues: Large ribosomal subunit protein uL22 (109 aa).

The protein belongs to the universal ribosomal protein uL22 family. Part of the 50S ribosomal subunit.

Its function is as follows. This protein binds specifically to 23S rRNA; its binding is stimulated by other ribosomal proteins, e.g. L4, L17, and L20. It is important during the early stages of 50S assembly. It makes multiple contacts with different domains of the 23S rRNA in the assembled 50S subunit and ribosome. In terms of biological role, the globular domain of the protein is located near the polypeptide exit tunnel on the outside of the subunit, while an extended beta-hairpin is found that lines the wall of the exit tunnel in the center of the 70S ribosome. The polypeptide is Large ribosomal subunit protein uL22 (Polaromonas naphthalenivorans (strain CJ2)).